The chain runs to 164 residues: Cyclin-dependent kinase inhibitor 1 (164 aa).

Serine 2 carries the post-translational modification N-acetylserine. Serine 2 participates in a covalent cross-link: Glycyl serine ester (Ser-Gly) (interchain with G-Cter in ubiquitin). The C4-type zinc-finger motif lies at 13–41; that stretch reads HGSKACRRLFGPVDSEQLRRDCDALMAGC. Residues 17–24 form a required for binding cyclins region; the sequence is ACRRLFGP. Positions 53–58 are required for binding CDKs; the sequence is FVTETP. The tract at residues 80–164 is disordered; it reads AGPRGGRDDL…RRLIFSKRKP (85 aa). Serine 114 is modified (phosphoserine; by GSK3-beta). Residue serine 130 is modified to Phosphoserine. The PIP-box K+4 motif motif lies at 140–164; sequence RKRRQTSMTDFYHSKRRLIFSKRKP. A Nuclear localization signal motif is present at residues 141 to 156; it reads KRRQTSMTDFYHSKRR. Residue threonine 145 is modified to Phosphothreonine; by PKA, PKB/AKT1, PIM1 and PIM2. The residue at position 146 (serine 146) is a Phosphoserine; by PKC and NUAK1. The interval 152–164 is interaction with TRIM39; the sequence is HSKRRLIFSKRKP. The segment covering 153–164 has biased composition (basic residues); sequence SKRRLIFSKRKP. Serine 160 bears the Phosphoserine mark.

The protein belongs to the CDI family. In terms of assembly, interacts with HDAC1; the interaction is prevented by competitive binding of C10orf90/FATS to HDAC1 facilitating acetylation and protein stabilization of CDKN1A/p21. Interacts with MKRN1. Interacts with PSMA3. Interacts with PCNA. Component of the ternary complex, cyclin D-CDK4-CDKN1A. Interacts (via its N-terminal domain) with CDK4; the interaction promotes the assembly of the cyclin D-CDK4 complex, its nuclear translocation and promotes the cyclin D-dependent enzyme activity of CDK4. Binding to CDK2 leads to CDK2/cyclin E inactivation at the G1-S phase DNA damage checkpoint, thereby arresting cells at the G1-S transition during DNA repair. Interacts with PIM1. Interacts with STK11 and NUAK1. Interacts with DTL and TRIM39. Interacts with PKP3; the interaction sequesters CDKN1A to the cytoplasm thereby repressing its role as an inhibitor of CDK4- and CDK6-driven RB1 phosphorylation. In terms of processing, phosphorylation of Thr-145 by Akt or of Ser-146 by PKC impairs binding to PCNA. Phosphorylation at Ser-114 by GSK3-beta enhances ubiquitination by the DCX(DTL) complex. Phosphorylation of Thr-145 by PIM2 enhances protein stability and inhibits cell proliferation. Phosphorylation of Thr-145 by PIM1 results in the relocation of CDKN1A to the cytoplasm and enhanced CDKN1A protein stability. UV radiation-induced phosphorylation at Ser-146 by NUAK1 leads to its degradation. Post-translationally, ubiquitinated by MKRN1; leading to polyubiquitination and 26S proteasome-dependent degradation. Ubiquitinated by the DCX(DTL) complex, also named CRL4(CDT2) complex, leading to its degradation during S phase or following UV irradiation. Ubiquitination by the DCX(DTL) complex is essential to control replication licensing and is PCNA-dependent: interacts with PCNA via its PIP-box, while the presence of the containing the 'K+4' motif in the PIP box, recruit the DCX(DTL) complex, leading to its degradation. Ubiquitination at Ser-2 leads to degradation by the proteasome pathway. Ubiquitinated by RNF114; leading to proteasomal degradation. Acetylation leads to protein stability. Acetylated in vitro on Lys-141, Lys-154, Lys-161 and Lys-163. Deacetylation by HDAC1 is prevented by competitive binding of C10orf90/FATS to HDAC1.

It is found in the cytoplasm. The protein resides in the nucleus. Functionally, may be involved in p53/TP53 mediated inhibition of cellular proliferation in response to DNA damage. Binds to and inhibits cyclin-dependent kinase activity, preventing phosphorylation of critical cyclin-dependent kinase substrates and blocking cell cycle progression. Functions in the nuclear localization and assembly of cyclin D-CDK4 complex and promotes its kinase activity towards RB1. At higher stoichiometric ratios, inhibits the kinase activity of the cyclin D-CDK4 complex. Inhibits DNA synthesis by DNA polymerase delta by competing with POLD3 for PCNA binding. Plays an important role in controlling cell cycle progression and DNA damage-induced G2 arrest. Negatively regulates the CDK4- and CDK6-driven phosphorylation of RB1 in keratinocytes, thereby resulting in the release of E2F1 and subsequent transcription of E2F1-driven G1/S phase promoting genes. The sequence is that of Cyclin-dependent kinase inhibitor 1 (CDKN1A) from Felis catus (Cat).